The chain runs to 543 residues: uncharacterized protein (543 aa).

The Radical SAM core domain maps to 203–460 (NYPYIIAEIE…FLWFKEKVRE (258 aa)). A TRAM domain is found at 470 to 534 (VVPKGTILRD…RRSITGKVVR (65 aa)).

This is an uncharacterized protein from Methanocaldococcus jannaschii (strain ATCC 43067 / DSM 2661 / JAL-1 / JCM 10045 / NBRC 100440) (Methanococcus jannaschii).